A 154-amino-acid polypeptide reads, in one-letter code: MRCPYCRHPDSRVVDSREADDGQLIRRRRSCPECGKRFTTVEEAILAVVKRSGVTEPFSRTKIIGGVRKACQGRPVDDDSVALLAQKVEETVRAKGAAELPSHEVGLAILGPLRDLDEVAYLRFASVYRSFESLADFEREIETLRTAAQAREGG.

A zinc finger spans residues 3–34 (CPYCRHPDSRVVDSREADDGQLIRRRRSCPEC). One can recognise an ATP-cone domain in the interval 46 to 136 (LAVVKRSGVT…VYRSFESLAD (91 aa)).

This sequence belongs to the NrdR family. The cofactor is Zn(2+).

Negatively regulates transcription of bacterial ribonucleotide reductase nrd genes and operons by binding to NrdR-boxes. This chain is Transcriptional repressor NrdR, found in Salinispora tropica (strain ATCC BAA-916 / DSM 44818 / JCM 13857 / NBRC 105044 / CNB-440).